We begin with the raw amino-acid sequence, 711 residues long: Polyribonucleotide nucleotidyltransferase (711 aa).

The Mg(2+) site is built by Asp-490 and Asp-496. One can recognise a KH domain in the interval 557-616 (PRIETMQIPTDKIREVIGSGGKVIREIVETSGAKVDINDDGIIKIASANGEAIKKAYEMI). The S1 motif domain occupies 626-694 (GKVYTGTVVK…DRGKVRLSMK (69 aa)).

It belongs to the polyribonucleotide nucleotidyltransferase family. Requires Mg(2+) as cofactor.

It localises to the cytoplasm. It carries out the reaction RNA(n+1) + phosphate = RNA(n) + a ribonucleoside 5'-diphosphate. In terms of biological role, involved in mRNA degradation. Catalyzes the phosphorolysis of single-stranded polyribonucleotides processively in the 3'- to 5'-direction. This Dinoroseobacter shibae (strain DSM 16493 / NCIMB 14021 / DFL 12) protein is Polyribonucleotide nucleotidyltransferase.